The sequence spans 259 residues: Haloacid dehalogenase-like hydrolase domain-containing protein 2 (259 aa).

D13 and S15 together coordinate Mg(2+). Residues D13–S15 and T46–N47 contribute to the substrate site. The stretch at N47–E71 forms a coiled coil. The residue at position 50 (K50) is an N6-succinyllysine. Residue K179 participates in substrate binding. Mg(2+) is bound at residue D204.

Belongs to the HAD-like hydrolase superfamily. The cofactor is Mg(2+).

This Homo sapiens (Human) protein is Haloacid dehalogenase-like hydrolase domain-containing protein 2 (HDHD2).